The chain runs to 403 residues: F-box/LRR-repeat protein At1g06630 (403 aa).

The F-box domain maps to 11–59 (RDAINWLPDEILGKILSLLATKQAVSTSVLSKKWRTLFKLVDTLEFDDS). LRR repeat units lie at residues 239–262 (LPNLEYLDYSDYALYGYPQVNLES) and 288–312 (IRNVEILSLSPDSVGVIYSCCKYGL).

In Arabidopsis thaliana (Mouse-ear cress), this protein is F-box/LRR-repeat protein At1g06630.